The chain runs to 318 residues: NADH-ubiquinone oxidoreductase chain 1 (318 aa).

8 helical membrane-spanning segments follow: residues 2-22, 70-90, 100-120, 136-156, 171-191, 231-251, 253-273, and 293-313; these read FFIN…FLTL, LFII…VPLP, LGIL…LWSG, VAQT…VLLM, HMWL…STLA, IILM…YINL, ELYS…FLWI, and FLPL…FTAG.

This sequence belongs to the complex I subunit 1 family. In terms of assembly, core subunit of respiratory chain NADH dehydrogenase (Complex I) which is composed of 45 different subunits.

It is found in the mitochondrion inner membrane. It carries out the reaction a ubiquinone + NADH + 5 H(+)(in) = a ubiquinol + NAD(+) + 4 H(+)(out). Functionally, core subunit of the mitochondrial membrane respiratory chain NADH dehydrogenase (Complex I) which catalyzes electron transfer from NADH through the respiratory chain, using ubiquinone as an electron acceptor. Essential for the catalytic activity and assembly of complex I. In Mus musculus (Mouse), this protein is NADH-ubiquinone oxidoreductase chain 1 (Mtnd1).